We begin with the raw amino-acid sequence, 432 residues long: Trigger factor (432 aa).

The 86-residue stretch at D161–P246 folds into the PPIase FKBP-type domain.

It belongs to the FKBP-type PPIase family. Tig subfamily.

Its subcellular location is the cytoplasm. The catalysed reaction is [protein]-peptidylproline (omega=180) = [protein]-peptidylproline (omega=0). In terms of biological role, involved in protein export. Acts as a chaperone by maintaining the newly synthesized protein in an open conformation. Functions as a peptidyl-prolyl cis-trans isomerase. This chain is Trigger factor, found in Haemophilus influenzae (strain PittEE).